The primary structure comprises 114 residues: Fumarate reductase subunit D (114 aa).

The next 3 helical transmembrane spans lie at 24-44 (VSAIFLPVVILIIGLLLPFGL), 50-70 (LITFAYSWIGKLVILVLTIFP), and 92-112 (GGFIFYGLATIYTVWVLFAVI).

It belongs to the FrdD family. As to quaternary structure, part of an enzyme complex containing four subunits: a flavoprotein (FrdA), an iron-sulfur protein (FrdB), and two hydrophobic anchor proteins (FrdC and FrdD).

The protein localises to the cell inner membrane. In terms of biological role, anchors the catalytic components of the fumarate reductase complex to the cell membrane, binds quinones. This is Fumarate reductase subunit D from Haemophilus influenzae (strain 86-028NP).